The primary structure comprises 189 residues: MEVILLERIGRLGQMGDTVKVKDGYARNFLLPQGKALRANEANKKKFEGQRAQLEAQNLERKNEAQAVADKLNGESFIVVRSAGETGQLYGSVSTRDIAEIITADGFTLHRNQVELNHPIKTIGLHEVSVSLHPEVQVKVMVNIARSTEEAERQAKGEDLTSIEAIYGIEEQPLSEEVFDDEDEAEDQA.

It belongs to the bacterial ribosomal protein bL9 family.

Its function is as follows. Binds to the 23S rRNA. The polypeptide is Large ribosomal subunit protein bL9 (Brucella canis (strain ATCC 23365 / NCTC 10854 / RM-666)).